The primary structure comprises 90 residues: Small ribosomal subunit protein bS16 (90 aa).

The protein belongs to the bacterial ribosomal protein bS16 family.

This is Small ribosomal subunit protein bS16 from Listeria innocua serovar 6a (strain ATCC BAA-680 / CLIP 11262).